The primary structure comprises 831 residues: V-type proton ATPase 116 kDa subunit a1 (831 aa).

The Cytoplasmic segment spans residues Met1–Glu388. The chain crosses the membrane as a helical span at residues Ile389–Phe407. At Gly408–Asp409 the chain is on the vacuolar side. The chain crosses the membrane as a helical span at residues Phe410–Arg426. The Cytoplasmic segment spans residues Glu427 to Ser441. A helical membrane pass occupies residues Met442 to Ala471. The Vacuolar portion of the chain corresponds to Leu472–Ser534. A helical transmembrane segment spans residues Phe535–Leu554. The Cytoplasmic portion of the chain corresponds to Ser555–Phe572. Residues Ile573–Lys593 form a helical membrane-spanning segment. The Vacuolar portion of the chain corresponds to Trp594 to Phe638. A helical membrane pass occupies residues Leu639–Leu658. Over Arg659–Thr718 the chain is Cytoplasmic. A helical transmembrane segment spans residues Ile719–Ala743. Topologically, residues Gln744–Gly764 are vacuolar. Residues Gly765–Glu803 form a helical membrane-spanning segment. The Cytoplasmic segment spans residues Phe804–Asp831.

The protein belongs to the V-ATPase 116 kDa subunit family. V-ATPase is a heteromultimeric enzyme made up of two complexes: the ATP-hydrolytic V1 complex and the proton translocation V0 complex. The V1 complex consists of three catalytic AB heterodimers that form a heterohexamer, three peripheral stalks each consisting of EG heterodimers, one central rotor including subunits D and F, and the regulatory subunits C and H. The proton translocation complex V0 consists of the proton transport subunit a, a ring of proteolipid subunits c9c'', rotary subunit d, subunits e and f, and two accessory subunits.

The protein resides in the cytoplasmic vesicle. It is found in the clathrin-coated vesicle membrane. The protein localises to the secretory vesicle. It localises to the synaptic vesicle membrane. Its subcellular location is the melanosome. In terms of biological role, subunit of the V0 complex of vacuolar(H+)-ATPase (V-ATPase), a multisubunit enzyme composed of a peripheral complex (V1) that hydrolyzes ATP and a membrane integral complex (V0) that translocates protons. V-ATPase is responsible for acidifying and maintaining the pH of intracellular compartments and in some cell types, is targeted to the plasma membrane, where it is responsible for acidifying the extracellular environment. Required for assembly and activity of the vacuolar ATPase. In Xenopus laevis (African clawed frog), this protein is V-type proton ATPase 116 kDa subunit a1 (atp6v0a1).